The following is a 428-amino-acid chain: Kynureninase (428 aa).

Pyridoxal 5'-phosphate contacts are provided by residues T104, T105, 132–135 (FPSD), D213, H216, and Y238. Position 239 is an N6-(pyridoxal phosphate)lysine (K239). Residues W267 and T295 each contribute to the pyridoxal 5'-phosphate site.

It belongs to the kynureninase family. As to quaternary structure, homodimer. Pyridoxal 5'-phosphate is required as a cofactor.

The enzyme catalyses L-kynurenine + H2O = anthranilate + L-alanine + H(+). It catalyses the reaction 3-hydroxy-L-kynurenine + H2O = 3-hydroxyanthranilate + L-alanine + H(+). The protein operates within amino-acid degradation; L-kynurenine degradation; L-alanine and anthranilate from L-kynurenine: step 1/1. Its pathway is cofactor biosynthesis; NAD(+) biosynthesis; quinolinate from L-kynurenine: step 2/3. Its function is as follows. Catalyzes the cleavage of L-kynurenine (L-Kyn) and L-3-hydroxykynurenine (L-3OHKyn) into anthranilic acid (AA) and 3-hydroxyanthranilic acid (3-OHAA), respectively. The protein is Kynureninase of Bacillus anthracis.